Consider the following 435-residue polypeptide: Aspartate aminotransferase (435 aa).

Pyridoxal 5'-phosphate contacts are provided by residues Y69 and 100-101 (SL). 139-141 (YDR) contacts substrate. Pyridoxal 5'-phosphate is bound by residues N189, Y221, and 254–256 (STS). Substrate is bound at residue R392.

It belongs to the class-I pyridoxal-phosphate-dependent aminotransferase family. Pyridoxal 5'-phosphate serves as cofactor.

The catalysed reaction is L-aspartate + 2-oxoglutarate = oxaloacetate + L-glutamate. Main aspartate aminotransferase that couples nitrogen assimilation to aspartate synthesis. Has a weak, but significant, side activity toward kynurenine (Kyn). Oxaloacetate and 2-oxoglutarate, but not pyruvate, serve as amino acceptors, while Asp, Glu and Kyn serve as the best amino donors. Essential for axenic growth and survival of M.tuberculosis in macrophages and in mice. This Mycobacterium tuberculosis (strain ATCC 25618 / H37Rv) protein is Aspartate aminotransferase.